The sequence spans 171 residues: Inosine/xanthosine triphosphatase (171 aa).

Position 8 to 13 (8 to 13) interacts with substrate; sequence TTNPAK. 2 residues coordinate Mg(2+): aspartate 38 and glutamine 68.

The protein belongs to the YjjX NTPase family. As to quaternary structure, homodimer. The cofactor is Mg(2+). Mn(2+) is required as a cofactor.

It catalyses the reaction XTP + H2O = XDP + phosphate + H(+). It carries out the reaction ITP + H2O = IDP + phosphate + H(+). In terms of biological role, phosphatase that hydrolyzes non-canonical purine nucleotides such as XTP and ITP to their respective diphosphate derivatives. Probably excludes non-canonical purines from DNA/RNA precursor pool, thus preventing their incorporation into DNA/RNA and avoiding chromosomal lesions. The sequence is that of Inosine/xanthosine triphosphatase from Cronobacter sakazakii (strain ATCC BAA-894) (Enterobacter sakazakii).